Here is a 541-residue protein sequence, read N- to C-terminus: Chaperonin GroEL, cyanelle (541 aa).

Residues 29-32 (TLGP), 86-90 (DGTTT), Gly413, 479-481 (NAA), and Asp495 each bind ATP.

Belongs to the chaperonin (HSP60) family. Forms a cylinder of 14 subunits composed of two heptameric rings stacked back-to-back. Interacts with the co-chaperonin GroES.

The protein localises to the plastid. It is found in the cyanelle. The enzyme catalyses ATP + H2O + a folded polypeptide = ADP + phosphate + an unfolded polypeptide.. Its function is as follows. Together with its co-chaperonin GroES, plays an essential role in assisting protein folding. The GroEL-GroES system forms a nano-cage that allows encapsulation of the non-native substrate proteins and provides a physical environment optimized to promote and accelerate protein folding. This is Chaperonin GroEL, cyanelle from Cyanophora paradoxa.